A 100-amino-acid chain; its full sequence is Small ribosomal subunit protein bS20 (100 aa).

Residues 1–18 are compositionally biased toward basic and acidic residues; sequence MPNKKSAEKRVRQSEQRR. Positions 1–26 are disordered; sequence MPNKKSAEKRVRQSEQRRQKNRGYQK.

It belongs to the bacterial ribosomal protein bS20 family.

Functionally, binds directly to 16S ribosomal RNA. The protein is Small ribosomal subunit protein bS20 of Petrotoga mobilis (strain DSM 10674 / SJ95).